A 248-amino-acid chain; its full sequence is Probable proteasome subunit alpha type-3 (248 aa).

Belongs to the peptidase T1A family. The 26S proteasome consists of a 20S proteasome core and two 19S regulatory subunits. The 20S proteasome core is composed of 28 subunits that are arranged in four stacked rings, resulting in a barrel-shaped structure. The two end rings are each formed by seven alpha subunits, and the two central rings are each formed by seven beta subunits. The catalytic chamber with the active sites is on the inside of the barrel.

It is found in the cytoplasm. Its subcellular location is the nucleus. In terms of biological role, the proteasome is a multicatalytic proteinase complex which is characterized by its ability to cleave peptides with Arg, Phe, Tyr, Leu, and Glu adjacent to the leaving group at neutral or slightly basic pH. The proteasome has an ATP-dependent proteolytic activity. In Schizosaccharomyces pombe (strain 972 / ATCC 24843) (Fission yeast), this protein is Probable proteasome subunit alpha type-3.